The following is a 117-amino-acid chain: Prefoldin subunit beta (117 aa).

Belongs to the prefoldin subunit beta family. As to quaternary structure, heterohexamer of two alpha and four beta subunits.

It is found in the cytoplasm. Molecular chaperone capable of stabilizing a range of proteins. Seems to fulfill an ATP-independent, HSP70-like function in archaeal de novo protein folding. The sequence is that of Prefoldin subunit beta from Pyrococcus furiosus (strain ATCC 43587 / DSM 3638 / JCM 8422 / Vc1).